A 151-amino-acid chain; its full sequence is Large ribosomal subunit protein uL13 (151 aa).

Belongs to the universal ribosomal protein uL13 family. Part of the 50S ribosomal subunit.

Functionally, this protein is one of the early assembly proteins of the 50S ribosomal subunit, although it is not seen to bind rRNA by itself. It is important during the early stages of 50S assembly. This is Large ribosomal subunit protein uL13 from Synechococcus sp. (strain JA-3-3Ab) (Cyanobacteria bacterium Yellowstone A-Prime).